The primary structure comprises 550 residues: Chaperonin GroEL (550 aa).

Residues 30-33, Lys51, 87-91, Gly415, and Asp496 contribute to the ATP site; these read TLGP and DGTTT.

Belongs to the chaperonin (HSP60) family. As to quaternary structure, forms a cylinder of 14 subunits composed of two heptameric rings stacked back-to-back. Interacts with the co-chaperonin GroES.

The protein resides in the cytoplasm. The enzyme catalyses ATP + H2O + a folded polypeptide = ADP + phosphate + an unfolded polypeptide.. Together with its co-chaperonin GroES, plays an essential role in assisting protein folding. The GroEL-GroES system forms a nano-cage that allows encapsulation of the non-native substrate proteins and provides a physical environment optimized to promote and accelerate protein folding. The polypeptide is Chaperonin GroEL (Rickettsia typhi (strain ATCC VR-144 / Wilmington)).